The following is a 419-amino-acid chain: UDP-N-acetylglucosamine 1-carboxyvinyltransferase (419 aa).

22-23 (KN) serves as a coordination point for phosphoenolpyruvate. Residue Arg-91 coordinates UDP-N-acetyl-alpha-D-glucosamine. Cys-115 serves as the catalytic Proton donor. The residue at position 115 (Cys-115) is a 2-(S-cysteinyl)pyruvic acid O-phosphothioketal. UDP-N-acetyl-alpha-D-glucosamine is bound by residues 120 to 124 (RPVDL), 160 to 163 (KVSV), Asp-305, and Val-327.

This sequence belongs to the EPSP synthase family. MurA subfamily.

The protein localises to the cytoplasm. The enzyme catalyses phosphoenolpyruvate + UDP-N-acetyl-alpha-D-glucosamine = UDP-N-acetyl-3-O-(1-carboxyvinyl)-alpha-D-glucosamine + phosphate. Its pathway is cell wall biogenesis; peptidoglycan biosynthesis. Its function is as follows. Cell wall formation. Adds enolpyruvyl to UDP-N-acetylglucosamine. The chain is UDP-N-acetylglucosamine 1-carboxyvinyltransferase from Salmonella gallinarum (strain 287/91 / NCTC 13346).